Consider the following 403-residue polypeptide: Acetylornithine aminotransferase (403 aa).

Pyridoxal 5'-phosphate contacts are provided by residues 107-108 (GA) and Phe140. Arg143 serves as a coordination point for N(2)-acetyl-L-ornithine. 225–228 (DEVQ) serves as a coordination point for pyridoxal 5'-phosphate. Lys254 carries the N6-(pyridoxal phosphate)lysine modification. Ser282 is a binding site for N(2)-acetyl-L-ornithine. Pyridoxal 5'-phosphate is bound at residue Thr283.

This sequence belongs to the class-III pyridoxal-phosphate-dependent aminotransferase family. ArgD subfamily. As to quaternary structure, homodimer. The cofactor is pyridoxal 5'-phosphate.

The protein resides in the cytoplasm. It catalyses the reaction N(2)-acetyl-L-ornithine + 2-oxoglutarate = N-acetyl-L-glutamate 5-semialdehyde + L-glutamate. It participates in amino-acid biosynthesis; L-arginine biosynthesis; N(2)-acetyl-L-ornithine from L-glutamate: step 4/4. The chain is Acetylornithine aminotransferase from Vibrio cholerae serotype O1 (strain ATCC 39315 / El Tor Inaba N16961).